The chain runs to 107 residues: UPF0060 membrane protein mll7841 (107 aa).

4 consecutive transmembrane segments (helical) span residues 4–24 (LFYT…WAWW), 30–50 (PLWL…LALV), 60–80 (AAYG…VEGV), and 87–107 (LAGA…PRGA).

This sequence belongs to the UPF0060 family.

It is found in the cell inner membrane. This is UPF0060 membrane protein mll7841 from Mesorhizobium japonicum (strain LMG 29417 / CECT 9101 / MAFF 303099) (Mesorhizobium loti (strain MAFF 303099)).